Here is a 429-residue protein sequence, read N- to C-terminus: Light-independent protochlorophyllide reductase subunit N (429 aa).

3 residues coordinate [4Fe-4S] cluster: cysteine 32, cysteine 57, and cysteine 118.

The protein belongs to the BchN/ChlN family. Protochlorophyllide reductase is composed of three subunits; BchL, BchN and BchB. Forms a heterotetramer of two BchB and two BchN subunits. Requires [4Fe-4S] cluster as cofactor.

The catalysed reaction is chlorophyllide a + oxidized 2[4Fe-4S]-[ferredoxin] + 2 ADP + 2 phosphate = protochlorophyllide a + reduced 2[4Fe-4S]-[ferredoxin] + 2 ATP + 2 H2O. Its pathway is porphyrin-containing compound metabolism; bacteriochlorophyll biosynthesis (light-independent). Component of the dark-operative protochlorophyllide reductase (DPOR) that uses Mg-ATP and reduced ferredoxin to reduce ring D of protochlorophyllide (Pchlide) to form chlorophyllide a (Chlide). This reaction is light-independent. The NB-protein (BchN-BchB) is the catalytic component of the complex. In Rhodopseudomonas palustris (strain TIE-1), this protein is Light-independent protochlorophyllide reductase subunit N.